A 460-amino-acid polypeptide reads, in one-letter code: Lipase member H-A (460 aa).

The N-terminal stretch at 1–26 (MLLSFYFNGLLLVGCLLSWGRSDTEG) is a signal peptide. Residues N67 and N75 are each glycosylated (N-linked (GlcNAc...) asparagine). The active-site Nucleophile is S163. N-linked (GlcNAc...) asparagine glycosylation is present at N177. D187 acts as the Charge relay system in catalysis. Cysteines 242 and 255 form a disulfide. The active-site Charge relay system is H257. 2 disulfide bridges follow: C279–C290 and C293–C301. N289 is a glycosylation site (N-linked (GlcNAc...) asparagine). Residue N366 is glycosylated (N-linked (GlcNAc...) asparagine). C436 and C455 form a disulfide bridge.

This sequence belongs to the AB hydrolase superfamily. Lipase family.

It is found in the secreted. The protein resides in the cell membrane. The catalysed reaction is 1-hexadecanoyl-2-(9Z-octadecenoyl)-sn-glycero-3-phosphate + H2O = 2-(9Z-octadecenoyl)-sn-glycero-3-phosphate + hexadecanoate + H(+). Its function is as follows. Hydrolyzes specifically phosphatidic acid (PA) to produce 2-acyl lysophosphatidic acid (LPA; a potent bioactive lipid mediator) and fatty acid. Does not hydrolyze other phospholipids, like phosphatidylserine (PS), phosphatidylcholine (PC) and phosphatidylethanolamine (PE) or triacylglycerol (TG). This is Lipase member H-A (liph-a) from Xenopus laevis (African clawed frog).